The chain runs to 357 residues: MKVDPNKEKALAAVLSQIEKQFGKGSIMKLGEDRSMDVETISTGSLSLDVALGAGGLPMGRIVEIYGPESSGKTTLTLEVIAAAQREGKTCAFIDAEHALDPIYAKKLGVDIDNLLCSQPDTGEQALEICDALTRSGAVDVIIVDSVAALTPKAEIEGEIGDSHMGLAARMMSQAMRKLAGNLKQSNTLLIFINQIRMKIGVMFGNPETTTGGNALKFYASVRLDIRRTGAIKEGDEVVGNETRVKVVKNKVAAPFKQAEFQILYGQGINRTGELVDLGVAHKLIEKAGAWYSYKGDKIGQGRANAGKYLTENPAIAAEIDKTLRELLLSNPSAMSSSSSDDENSEGNVDFETGEVF.

67–74 (GPESSGKT) contributes to the ATP binding site. Residues 332–357 (PSAMSSSSSDDENSEGNVDFETGEVF) form a disordered region.

Belongs to the RecA family.

It is found in the cytoplasm. Functionally, can catalyze the hydrolysis of ATP in the presence of single-stranded DNA, the ATP-dependent uptake of single-stranded DNA by duplex DNA, and the ATP-dependent hybridization of homologous single-stranded DNAs. It interacts with LexA causing its activation and leading to its autocatalytic cleavage. This is Protein RecA from Shewanella sp. (strain ANA-3).